We begin with the raw amino-acid sequence, 478 residues long: MSAPLLKLGAVLSTMAMISNWMSQTLPSLVGLNTTRLSAPDTLTQISPKEGWQVYSSAQDPDGRCICTVVAPEQNLCSRDAKSRQLRQLLEKVQNMSQSIEVLNLRTQRDFQYVLKMETQMKGLKAKFRQIEDDRKTLMTKHFQELKEKMDELLPLIPVLEQYKTDAKLITQFKEEIRNLSSVLTGIQEEIGAYDYEELHQRVLSLETRLRDCMKKLTCGKLMKITGPITVKTSGTRFGAWMTDPLASEKNNRVWYMDSYTNNKIVREYKSIADFVSGAESRTYNLPFKWAGTNHVVYNGSLYFNKYQSNIIIKYSFDLGRVLAQRSLEYAGFHNVYPYTWGGFSDIDLMADEIGLWAVYATNQNAGNIVISQLNQDTLEVMKSWSTGYPKRSAGESFMICGTLYVTNSHLTGAKVYYSYSTKTSTYEYTDIPFHNQYFHISMLDYNARDRALYAWNNGHQVLFNVTLFHIIKTEDDT.

The N-terminal stretch at 1–23 is a signal peptide; sequence MSAPLLKLGAVLSTMAMISNWMS. Residues Asn33, Asn95, Asn179, Asn299, and Asn465 are each glycosylated (N-linked (GlcNAc...) asparagine). Positions 77-217 form a coiled coil; the sequence is CSRDAKSRQL…TRLRDCMKKL (141 aa). One can recognise an Olfactomedin-like domain in the interval 218-470; the sequence is TCGKLMKITG…QVLFNVTLFH (253 aa). Cys219 and Cys401 form a disulfide bridge.

Peripherally associated with AMPAR complex. AMPAR complex consists of an inner core made of 4 pore-forming GluA/GRIA proteins (GRIA1, GRIA2, GRIA3 and GRIA4) and 4 major auxiliary subunits arranged in a twofold symmetry. One of the two pairs of distinct binding sites is occupied either by CNIH2, CNIH3 or CACNG2, CACNG3. The other harbors CACNG2, CACNG3, CACNG4, CACNG8 or GSG1L. This inner core of AMPAR complex is complemented by outer core constituents binding directly to the GluA/GRIA proteins at sites distinct from the interaction sites of the inner core constituents. Outer core constituents include at least PRRT1, PRRT2, CKAMP44/SHISA9, FRRS1L and NRN1. The proteins of the inner and outer core serve as a platform for other, more peripherally associated AMPAR constituents, including OLFM3. Alone or in combination, these auxiliary subunits control the gating and pharmacology of the AMPAR complex and profoundly impact their biogenesis and protein processing. Homodimer. Interacts with MYOC. Interacts with OLFM2. As to expression, expressed in the brain (at protein level). Also expressed in the retina, mainly in the ganglion cell layer and in the amacrine cell subregion of the inner nuclear layer. Expressed at high levels in the epithelial cells of the posterior iris and the ciliary body and, at lower levels, in the trabecular meshwork. Isoform 2 preferentially expressed in retina and brain, while isoform 1 preferentially expressed in the tissues of the eye angle.

The protein resides in the secreted. It localises to the synapse. In Rattus norvegicus (Rat), this protein is Noelin-3 (Olfm3).